The following is a 122-amino-acid chain: Glycine cleavage system H protein (122 aa).

In terms of domain architecture, Lipoyl-binding spans 19–101; the sequence is TATIGITKHA…EGNSWLYKIK (83 aa). Lysine 60 carries the N6-lipoyllysine modification.

The protein belongs to the GcvH family. As to quaternary structure, the glycine cleavage system is composed of four proteins: P, T, L and H. (R)-lipoate is required as a cofactor.

Its function is as follows. The glycine cleavage system catalyzes the degradation of glycine. The H protein shuttles the methylamine group of glycine from the P protein to the T protein. This is Glycine cleavage system H protein from Dinoroseobacter shibae (strain DSM 16493 / NCIMB 14021 / DFL 12).